Here is a 233-residue protein sequence, read N- to C-terminus: Urease accessory protein UreF (233 aa).

This sequence belongs to the UreF family. UreD, UreF and UreG form a complex that acts as a GTP-hydrolysis-dependent molecular chaperone, activating the urease apoprotein by helping to assemble the nickel containing metallocenter of UreC. The UreE protein probably delivers the nickel.

It is found in the cytoplasm. In terms of biological role, required for maturation of urease via the functional incorporation of the urease nickel metallocenter. This Polaromonas sp. (strain JS666 / ATCC BAA-500) protein is Urease accessory protein UreF.